The chain runs to 1740 residues: DNA polymerase (1740 aa).

The tract at residues 472-491 is disordered; that stretch reads IEMPHNQEDSDSEKEDEDTD. The segment covering 480–491 has biased composition (acidic residues); it reads DSDSEKEDEDTD. Residues 1189–1334 form the DOD-type homing endonuclease domain; that stretch reads VWGFFMGDGS…LFYLLKSLGY (146 aa). A disordered region spans residues 1673-1701; it reads PKESGSKTAKKPYQSQKLQKTKSSNKSQI. Over residues 1685–1700 the composition is skewed to polar residues; sequence YQSQKLQKTKSSNKSQ.

Belongs to the DNA polymerase type-B family. This protein undergoes a protein self splicing that involves a post-translational excision of the intervening region (intein) followed by peptide ligation.

The catalysed reaction is DNA(n) + a 2'-deoxyribonucleoside 5'-triphosphate = DNA(n+1) + diphosphate. This Acanthamoeba polyphaga (Amoeba) protein is DNA polymerase (POLB).